Here is a 242-residue protein sequence, read N- to C-terminus: Zinc finger protein ZOP1 (242 aa).

A Matrin-type zinc finger spans residues 11–42 (KWCEFCKIWIQNNPTSIRNHDLGKRHRECVDK). A coiled-coil region spans residues 42 to 71 (KKLTDMRERSAAKDKELKKNEKLLQQIEAK). The tract at residues 154-242 (VKKPVSSSGA…PLLGLYNRPF (89 aa)) is disordered. The segment covering 155 to 172 (KKPVSSSGAGPSVGKPPG) has biased composition (low complexity). Over residues 201 to 233 (RQDEKPKKVSAEEKAALKAREAARKRVEDREKP) the composition is skewed to basic and acidic residues.

Component of a pre-mRNA splicing complex. Interacts with STA1. Interacts with PRP31.

It is found in the nucleus. The protein resides in the cajal body. In terms of biological role, nucleic acid-binding protein that promotes Pol IV-dependent small interfering RNA (siRNA) accumulation, DNA methylation and transcriptional silencing. May possess both RNA-directed DNA methylation (RdDM)-dependent and -independent roles in transcriptional silencing. Acts as a pre-mRNA splicing factor that associates with several typical components of the splicing machinery as well as with Pol II. In Arabidopsis thaliana (Mouse-ear cress), this protein is Zinc finger protein ZOP1.